The following is a 680-amino-acid chain: Fermitin family homolog 2 (680 aa).

The segment at 40-81 is interaction with membranes containing phosphatidylinositol phosphate; it reads HIGGVMLKLVEKLDVKKDWSDHALWWEKKRTWLLKTHWTLDK. The segment at 141–162 is disordered; sequence LKKPRDPTKKKKKKLDDQSEDE. Ser159, Ser181, Ser339, and Ser351 each carry phosphoserine. Residues 189-661 enclose the FERM domain; sequence MTPTYDAHDG…GYIFLSTRAK (473 aa). Positions 380-476 constitute a PH domain; it reads KVFKPKKLTL…WMAACRLASK (97 aa). Residue Lys383 participates in a 1,2-diacyl-sn-glycero-3-phospho-(1D-myo-inositol-3,4,5-trisphosphate) binding. A Phosphoserine modification is found at Ser666.

It belongs to the kindlin family. In terms of assembly, interacts with ITGB1; the interaction is inhibited in presence of ITGB1BP1. Interacts with FBLIM1. Interacts with active, unphosphorylated CTNNB1. Identified in a complex with CTNNB1 and TCF7L2/TCF4. Interacts with ILK, ITGB1 and ITGB3. Detected in adult heart muscle (at protein level). Detected in heart, skeletal muscle and testis.

The protein resides in the cytoplasm. Its subcellular location is the cell cortex. It localises to the cytoskeleton. The protein localises to the stress fiber. It is found in the cell junction. The protein resides in the focal adhesion. Its subcellular location is the membrane. It localises to the cell projection. The protein localises to the lamellipodium membrane. It is found in the nucleus. The protein resides in the myofibril. Its subcellular location is the sarcomere. It localises to the i band. The protein localises to the cell surface. Functionally, scaffolding protein that enhances integrin activation mediated by TLN1 and/or TLN2, but activates integrins only weakly by itself. Binds to membranes enriched in phosphoinositides. Enhances integrin-mediated cell adhesion onto the extracellular matrix and cell spreading; this requires both its ability to interact with integrins and with phospholipid membranes. Required for the assembly of focal adhesions. Participates in the connection between extracellular matrix adhesion sites and the actin cytoskeleton and also in the orchestration of actin assembly and cell shape modulation. Recruits FBLIM1 to focal adhesions. Plays a role in the TGFB1 and integrin signaling pathways. Stabilizes active CTNNB1 and plays a role in the regulation of transcription mediated by CTNNB1 and TCF7L2/TCF4 and in Wnt signaling. This chain is Fermitin family homolog 2 (Fermt2), found in Mus musculus (Mouse).